Consider the following 110-residue polypeptide: Holo-[acyl-carrier-protein] synthase (110 aa).

2 residues coordinate Mg(2+): D8 and E54.

It belongs to the P-Pant transferase superfamily. AcpS family. It depends on Mg(2+) as a cofactor.

Its subcellular location is the cytoplasm. The enzyme catalyses apo-[ACP] + CoA = holo-[ACP] + adenosine 3',5'-bisphosphate + H(+). Functionally, transfers the 4'-phosphopantetheine moiety from coenzyme A to a Ser of acyl-carrier-protein. The protein is Holo-[acyl-carrier-protein] synthase of Mycoplasma mycoides subsp. mycoides SC (strain CCUG 32753 / NCTC 10114 / PG1).